A 92-amino-acid chain; its full sequence is Small ribosomal subunit protein uS19 (92 aa).

This sequence belongs to the universal ribosomal protein uS19 family.

Functionally, protein S19 forms a complex with S13 that binds strongly to the 16S ribosomal RNA. This chain is Small ribosomal subunit protein uS19, found in Borreliella afzelii (strain PKo) (Borrelia afzelii).